Reading from the N-terminus, the 502-residue chain is MVNQTHEFLLEMTGVSKEFPGVKALDKVNLNVRPHSIHALMGENGAGKSTLLKCLFGIYEKNEGNILFLGKEVNFTSSKEALESGVSMVHQELNQVKQCSVMDNIWLGRYPKKGFFVDHDKMYRDTKAIFAELDIDIDPKVKVATLSVSQMQMVEIAKAFSYDAKIVIMDEPTSSLTEKEVSHLFTIINKLKEKGCGVVYISHKMEEIFAICDEITILRDGQWVDTRPLKGLDMDQIIAMMVGRELTHRFPEKTNTPKDVILEVENLTALNQPSIQDVSFELKAGEILGVAGLVGSRRTDIVETIFGVRERSEGHIRLHGREMKNRDAHEAINNGFALVTEERRSTGIYGNLDITFNALVANVDEYKTQMGLLSDKKMKSDTQWVIDSMRVKTPSHQTHISSLSGGNQQKVIIGRWLLTQPEILMLDEPTRGIDVGAKFEIYQLILELAKKNKGIIIISSEMPELLGITDRILVMSNGRAAGIVNTKETSQNEILELASRYL.

2 ABC transporter domains span residues 10–245 (LEMT…VGRE) and 255–502 (NTPK…SRYL). Position 42–49 (42–49 (GENGAGKS)) interacts with ATP.

The protein belongs to the ABC transporter superfamily. Galactose/methyl galactoside importer (TC 3.A.1.2.3) family. In terms of assembly, the complex is composed of one ATP-binding protein (MglA), two transmembrane proteins (MglC) and a solute-binding protein (MglB).

It is found in the cell inner membrane. It catalyses the reaction D-galactose(out) + ATP + H2O = D-galactose(in) + ADP + phosphate + H(+). The enzyme catalyses methyl beta-D-galactoside(out) + ATP + H2O = methyl beta-D-galactoside(in) + ADP + phosphate + H(+). In terms of biological role, part of the ABC transporter complex MglABC involved in galactose/methyl galactoside import. Responsible for energy coupling to the transport system. In Vibrio vulnificus (strain CMCP6), this protein is Galactose/methyl galactoside import ATP-binding protein MglA.